A 452-amino-acid chain; its full sequence is Phosphoglucosamine mutase (452 aa).

S97 serves as the catalytic Phosphoserine intermediate. Mg(2+) contacts are provided by S97, D236, D238, and D240. S97 is subject to Phosphoserine.

Belongs to the phosphohexose mutase family. Mg(2+) serves as cofactor. Post-translationally, activated by phosphorylation.

It catalyses the reaction alpha-D-glucosamine 1-phosphate = D-glucosamine 6-phosphate. Functionally, catalyzes the conversion of glucosamine-6-phosphate to glucosamine-1-phosphate. This is Phosphoglucosamine mutase from Prochlorococcus marinus subsp. pastoris (strain CCMP1986 / NIES-2087 / MED4).